A 142-amino-acid polypeptide reads, in one-letter code: Hemoglobin subunit alpha-3 (142 aa).

A Globin domain is found at 2–142 (TLTDSDKAAV…VATVLTSKYR (141 aa)). Histidine 59 serves as a coordination point for O2. A heme b-binding site is contributed by histidine 88.

This sequence belongs to the globin family. As to quaternary structure, heterotetramer of two alpha chains and two beta chains. In terms of tissue distribution, red blood cells.

This is a larval (tadpole) alpha-globin. This Xenopus laevis (African clawed frog) protein is Hemoglobin subunit alpha-3 (hba3).